A 451-amino-acid polypeptide reads, in one-letter code: UPF0210 protein NMB1652 (451 aa).

The protein belongs to the UPF0210 family. Homodimer.

The sequence is that of UPF0210 protein NMB1652 from Neisseria meningitidis serogroup B (strain ATCC BAA-335 / MC58).